Consider the following 67-residue polypeptide: Small, acid-soluble spore protein 2 (67 aa).

It belongs to the alpha/beta-type SASP family.

SASP are bound to spore DNA. They are double-stranded DNA-binding proteins that cause DNA to change to an a-like conformation. They protect the DNA backbone from chemical and enzymatic cleavage and are thus involved in dormant spore's high resistance to UV light. The sequence is that of Small, acid-soluble spore protein 2 (Su-2) from Sporosarcina ureae.